The sequence spans 300 residues: MEEEASSPGLGCSKPHLEKLTLGITRILESSPGVTEVTIIEKPPAERHMISSWEQKNNCVMPEDVKNFYLMTNGFHMTWSVKLDEHIIPLGSMAINSISKLTQLTQSSMYSLPNAPTLADLEDDTHEASDDQPEKPHFDSRSVIFELDSCNGSGKVCLVYKSGKPALAEDTEIWFLDRALYWHFLTDTFTAYYRLLITHLGLPQWQYAFTSYGISPQAKQWFSMYKPITYNTNLLTEETDSFVNKLDPSKVFKSKNKIVIPKKKGPVQPAGGQKGPSGPSGPSTSSTSKSSSGSGNPTRK.

Residues 257–300 (KIVIPKKKGPVQPAGGQKGPSGPSGPSTSSTSKSSSGSGNPTRK) are disordered. Residues 276–300 (PSGPSGPSTSSTSKSSSGSGNPTRK) show a composition bias toward low complexity.

Part of the neuronal tubulin polyglutamylase complex which contains TPGS1, TPGS2, TTLL1, LRRC49 and NICN1. Interacts with CSTPP1 and LRRC49.

The protein resides in the cytoplasm. It is found in the cytoskeleton. It localises to the microtubule organizing center. Its subcellular location is the centrosome. The protein localises to the centriolar satellite. Subunit of the tubulin polyglutamylase complex (TPGC). The complex mediates cilia and flagella polyglutamylation which is essential for their biogenesis and motility. The chain is Tubulin polyglutamylase complex subunit 2 (TPGS2) from Homo sapiens (Human).